We begin with the raw amino-acid sequence, 272 residues long: Dermonecrotic toxin LvSicTox-alphaIC1bi (272 aa).

His-5 is a catalytic residue. The Mg(2+) site is built by Glu-25 and Asp-27. His-41 serves as the catalytic Nucleophile. 2 disulfide bridges follow: Cys-45/Cys-51 and Cys-47/Cys-189. Position 84 (Asp-84) interacts with Mg(2+).

This sequence belongs to the arthropod phospholipase D family. Class II subfamily. It depends on Mg(2+) as a cofactor. As to expression, expressed by the venom gland.

It localises to the secreted. It catalyses the reaction an N-(acyl)-sphingosylphosphocholine = an N-(acyl)-sphingosyl-1,3-cyclic phosphate + choline. It carries out the reaction an N-(acyl)-sphingosylphosphoethanolamine = an N-(acyl)-sphingosyl-1,3-cyclic phosphate + ethanolamine. The catalysed reaction is a 1-acyl-sn-glycero-3-phosphocholine = a 1-acyl-sn-glycero-2,3-cyclic phosphate + choline. The enzyme catalyses a 1-acyl-sn-glycero-3-phosphoethanolamine = a 1-acyl-sn-glycero-2,3-cyclic phosphate + ethanolamine. Functionally, dermonecrotic toxins cleave the phosphodiester linkage between the phosphate and headgroup of certain phospholipids (sphingolipid and lysolipid substrates), forming an alcohol (often choline) and a cyclic phosphate. This toxin acts on sphingomyelin (SM). It may also act on ceramide phosphoethanolamine (CPE), lysophosphatidylcholine (LPC) and lysophosphatidylethanolamine (LPE), but not on lysophosphatidylserine (LPS), and lysophosphatidylglycerol (LPG). It acts by transphosphatidylation, releasing exclusively cyclic phosphate products as second products. Induces dermonecrosis, hemolysis, increased vascular permeability, edema, inflammatory response, and platelet aggregation. This chain is Dermonecrotic toxin LvSicTox-alphaIC1bi, found in Loxosceles variegata (Recluse spider).